Consider the following 299-residue polypeptide: Probable lipid kinase YegS (299 aa).

Positions 2 to 133 (AEFPASLLIL…IDMAQVNKQT (132 aa)) constitute a DAGKc domain. Residues Thr40, 66-72 (GDGTINE), and Thr95 contribute to the ATP site. Leu215, Asp218, and Leu220 together coordinate Mg(2+). Residue Glu271 is the Proton acceptor of the active site.

Belongs to the diacylglycerol/lipid kinase family. YegS lipid kinase subfamily. It depends on Mg(2+) as a cofactor. The cofactor is Ca(2+).

The protein resides in the cytoplasm. Probably phosphorylates lipids; the in vivo substrate is unknown. The polypeptide is Probable lipid kinase YegS (Shigella boydii serotype 18 (strain CDC 3083-94 / BS512)).